Here is an 818-residue protein sequence, read N- to C-terminus: H(+)/Cl(-) exchange transporter 3 (818 aa).

At 1–125 (MESEQLFHRG…WEMTKSLYDA (125 aa)) the chain is on the cytoplasmic side. 3 short sequence motifs (di-leucine internalization motif; mediates targeting to late endosome and lysosome membranes) span residues 28–29 (LL), 46–47 (LL), and 71–75 (LLDLL). The chain crosses the membrane as a helical span at residues 126-163 (WSGWLVVTLTGLASGALAGLIDIAADWMTDLKEGICLS). Residue Asn177 is glycosylated (N-linked (GlcNAc...) asparagine). The helical transmembrane segment at 209–232 (MNYIMYIFWALSFAFLAVSLVKVF) threads the bilayer. The short motif at 238–242 (GSGIP) is the Selectivity filter part_1 element. A chloride-binding site is contributed by Ser239. The helical intramembrane region spans 241 to 248 (IPEIKTIL). 2 consecutive transmembrane segments (helical) span residues 258–276 (GKWT…VASG) and 282–301 (EGPL…YLFP). The Selectivity filter part_2 signature appears at 280 to 284 (GKEGP). 2 intramembrane regions (helical) span residues 313 to 325 (VLSA…VSVA) and 329 to 337 (PIGGVLFSL). The next 3 membrane-spanning stretches (helical) occupy residues 349-367 (LWRS…RSIN), 391-416 (FPFI…AWCR), and 423-443 (FGKY…VIAF). Residues Asn451 and Asn479 are each glycosylated (N-linked (GlcNAc...) asparagine). 2 helical membrane passes run 500-520 (IWQL…TFGI) and 525-544 (GLFI…VGIA). Residues 525 to 529 (GLFIP) carry the Selectivity filter part_3 motif. Chloride is bound at residue Phe527. Intramembrane regions (helical) lie at residues 572-586 (GLYA…LGGV) and 590-601 (TVSLVVIVFELT). An intramembrane region (note=Loop between two helices) is located at residues 602–605 (GGLE). A helical transmembrane segment spans residues 606 to 624 (YIVPLMAAVMTSKWVGDAF). Residues 625–818 (GREGIYEAHI…NQDPASIMFN (194 aa)) are Cytoplasmic-facing. Tyr630 lines the chloride pocket. CBS domains lie at 658 to 722 (MRPR…ARKK) and 755 to 812 (LDMS…NQDP). ATP contacts are provided by residues 689 to 691 (YNG) and 796 to 799 (TKKD).

Belongs to the chloride channel (TC 2.A.49) family. ClC-3/CLCN3 subfamily. As to quaternary structure, monomer and homodimer. Forms heterodimers with CLCN4. In terms of assembly, interacts with GOPC, PDZK1 and NHERF1/EBP50. In terms of processing, N-glycosylated. As to expression, expressed primarily in tissues derived from neuroectoderm. Within the brain, its expression is particularly evident in the hippocampus, olfactory cortex, and olfactory bulb. Highly expressed in aortic and coronary vascular smooth muscle cells, and aortic endothelial cells. Also expressed in tracheal and alveolar epithelial cells, and intima and media of the pulmonary vessels. Expressed in bronchus and colon (at protein level).

It localises to the early endosome membrane. The protein resides in the late endosome membrane. Its subcellular location is the lysosome membrane. It is found in the cell membrane. The protein localises to the golgi apparatus membrane. It localises to the cell projection. The protein resides in the ruffle membrane. Its function is as follows. Strongly outwardly rectifying, electrogenic H(+)/Cl(-)exchanger which mediates the exchange of chloride ions against protons. The CLC channel family contains both chloride channels and proton-coupled anion transporters that exchange chloride or another anion for protons. The presence of conserved gating glutamate residues is typical for family members that function as antiporters. In terms of biological role, strongly outwardly rectifying, electrogenic H(+)/Cl(-)exchanger which mediates the exchange of chloride ions against protons. This Homo sapiens (Human) protein is H(+)/Cl(-) exchange transporter 3 (CLCN3).